Here is a 712-residue protein sequence, read N- to C-terminus: Secretin OutD (712 aa).

Positions Met1–Ala27 are cleaved as a signal peptide. The segment at Ala28 to Gly124 is N0. The segment at Glu126 to Gly190 is N1. The interval Asp191 to Val264 is N2. The interval Gly267–Asp394 is N3. Positions Gly288 to Gly342 are disordered. Residues Gln399–Asp651 are secretin. Positions Gln653 to Arg712 are s domain.

This sequence belongs to the bacterial secretin family. GSP D subfamily. Forms a cylindrical channel with 15 subunits.

It is found in the cell outer membrane. Its function is as follows. Involved in a type II secretion system (T2SS, formerly general secretion pathway, GSP) for the export of proteins. Required for the translocation of the multiple pectic enzymes. This subunit forms the outer membrane channel. This Dickeya chrysanthemi (Pectobacterium chrysanthemi) protein is Secretin OutD (outD).